A 572-amino-acid chain; its full sequence is 2-succinyl-5-enolpyruvyl-6-hydroxy-3-cyclohexene-1-carboxylate synthase (572 aa).

Belongs to the TPP enzyme family. MenD subfamily. In terms of assembly, homodimer. The cofactor is Mg(2+). Mn(2+) serves as cofactor. Requires thiamine diphosphate as cofactor.

It carries out the reaction isochorismate + 2-oxoglutarate + H(+) = 5-enolpyruvoyl-6-hydroxy-2-succinyl-cyclohex-3-ene-1-carboxylate + CO2. It functions in the pathway quinol/quinone metabolism; 1,4-dihydroxy-2-naphthoate biosynthesis; 1,4-dihydroxy-2-naphthoate from chorismate: step 2/7. The protein operates within quinol/quinone metabolism; menaquinone biosynthesis. Catalyzes the thiamine diphosphate-dependent decarboxylation of 2-oxoglutarate and the subsequent addition of the resulting succinic semialdehyde-thiamine pyrophosphate anion to isochorismate to yield 2-succinyl-5-enolpyruvyl-6-hydroxy-3-cyclohexene-1-carboxylate (SEPHCHC). In Vibrio campbellii (strain ATCC BAA-1116), this protein is 2-succinyl-5-enolpyruvyl-6-hydroxy-3-cyclohexene-1-carboxylate synthase.